The chain runs to 346 residues: MNNLKWVAYFLKSRMNWIFWILFLNFLMLGISLIDYDFPIDSLFYIVSLNLSLTMIFLLLTYFKEVKLYKHFDKDKEIEEIKHKDLAETPFQRHTVDYLYRQISAHKEKVVEQQLQLNMHEQTITEFVHDIKTPVTAMKLLIDQEKNQERKQALLYEWSRINSMLDTQLYITRLESQRKDMYFDYVSLKRMVIDEIQLTRHISQVKGIGFDVDFKVDDYVYTDIKWCRMIIRQILSNALKYSENFNIEIGTELNDQHVSLYIKDYGRGISKKDMPRIFERGFTSTANRNETTSSGMGLYLVNSVKDQLGIHLQVTSTVGKGTTVRLIFPLQNEIVERMSEVTNLSF.

The next 2 helical transmembrane spans lie at 15–35 (MNWI…SLID) and 43–63 (LFYI…LTYF). Positions 126 to 332 (EFVHDIKTPV…TVRLIFPLQN (207 aa)) constitute a Histidine kinase domain.

Interacts with GraX.

Its subcellular location is the cell membrane. It catalyses the reaction ATP + protein L-histidine = ADP + protein N-phospho-L-histidine.. Functionally, member of the two-component regulatory system GraR/GraS involved in resistance against cationic antimicrobial peptides (CAMPs). Functions as a sensor protein kinase which phosphorylates GraR through the auxiliary protein GraX. In turn, GraR up-regulates many genes such as adhesins, exoproteins, transporters, toxins, and proteins involved in cell wall synthesis. Down-regulates the expression of many genes involved in RNA and amino acid synthesis or glycolysis. The protein is Sensor histidine kinase GraS (graS) of Staphylococcus aureus (strain COL).